Here is a 1288-residue protein sequence, read N- to C-terminus: SH3 domain and tetratricopeptide repeat-containing protein 2 (1288 aa).

2 consecutive SH3 domains span residues 176 to 240 and 268 to 331; these read EGHF…PLPL and IGRG…PDSY. Polar residues predominate over residues 386–395; the sequence is NPPNDLSASQ. Disordered regions lie at residues 386 to 405 and 410 to 444; these read NPPN…VRPG and EHQA…LPEP. TPR repeat units follow at residues 528–561, 757–790, 836–869, 1001–1037, 1084–1118, 1119–1152, 1166–1199, and 1210–1244; these read ARLC…LNGA, RALC…GQLL, GVIY…AQEV, GRLL…FIDL, LKLY…LARR, LKAV…ATLA, LVAF…CPPW, and AKVY…AVLL.

Strongly expressed in brain and spinal cord. Expressed at equal level in spinal cord and sciatic nerve. Weakly expressed in striated muscle.

This is SH3 domain and tetratricopeptide repeat-containing protein 2 (SH3TC2) from Homo sapiens (Human).